A 185-amino-acid chain; its full sequence is MSIEIITGPMYSGKTTELIRRITRYKLCKKNCVIISHSIDNRHDDDNILINHDGFKISHDDFIKTNILINKIKIFDKYEIIGIDECQFFDSNDLIIFCDTLANNGKKIIVAGLNSDFNKNPFKSIIKLIPISEKITKLQSICNFCYNDATFTMKKFNKDIIIEIGGSDLYIPVCRICYNENNTIN.

Residue 8–15 participates in ATP binding; that stretch reads GPMYSGKT. Catalysis depends on Glu85, which acts as the Proton acceptor. Residue Phe117 participates in substrate binding. The Zn(2+) site is built by Cys142 and Cys145. 161–165 provides a ligand contact to substrate; the sequence is IIEIG. Cys174 and Cys177 together coordinate Zn(2+).

It belongs to the thymidine kinase family.

The catalysed reaction is thymidine + ATP = dTMP + ADP + H(+). This is Thymidine kinase (TK) from Choristoneura fumiferana entomopoxvirus (CfEPV).